Here is a 91-residue protein sequence, read N- to C-terminus: Lipolysis-activating peptide 1-alpha chain (91 aa).

Positions 1-22 (MMKLVLFGIIVILFSLIGSIHG) are cleaved as a signal peptide. The LCN-type CS-alpha/beta domain maps to 24–87 (SGNYPLNPYG…VWNAVKKHCK (64 aa)). Intrachain disulfides connect C38–C61, C47–C66, and C51–C68.

This sequence belongs to the long (3 C-C) scorpion toxin superfamily. As to quaternary structure, monomer (edited version) and heterodimer (non-edited version) of this alpha chain and a beta chain (AC P84809). In terms of tissue distribution, expressed by the venom gland.

The protein localises to the secreted. Functionally, the heterodimer non-edited LVP1 induces lipolysis in rat adipocytes. Induction of lipolysis by LVP1 appears to be mediated through the beta-2 adrenergic receptor pathway (ADRB2). Intracerebroventricular injection is not toxic to mice. Its function is as follows. The edited BmKBTx-like, similar to beta-toxins, may modulate voltage-gated sodium channels (Nav) and may block voltage-gated potassium channels (Kv). The protein is Lipolysis-activating peptide 1-alpha chain of Buthus occitanus tunetanus (Common European scorpion).